Here is a 505-residue protein sequence, read N- to C-terminus: DNA repair protein RadA (505 aa).

A C4-type zinc finger spans residues 10 to 27 (CSACGADHAQWFGRCPKC). ATP is bound at residue 107 to 114 (GDPGIGKS). The RadA KNRFG motif signature appears at 281 to 285 (KNRFG). A lon-protease-like region spans residues 380-505 (DAYLSVAGGL…KIEEDLGKKD (126 aa)). The segment at 485-505 (NTTDQGNGSEAKIEEDLGKKD) is disordered. Over residues 495–505 (AKIEEDLGKKD) the composition is skewed to basic and acidic residues.

It belongs to the RecA family. RadA subfamily.

DNA-dependent ATPase involved in processing of recombination intermediates, plays a role in repairing DNA breaks. Stimulates the branch migration of RecA-mediated strand transfer reactions, allowing the 3' invading strand to extend heteroduplex DNA faster. Binds ssDNA in the presence of ADP but not other nucleotides, has ATPase activity that is stimulated by ssDNA and various branched DNA structures, but inhibited by SSB. Does not have RecA's homology-searching function. The chain is DNA repair protein RadA from Synechocystis sp. (strain ATCC 27184 / PCC 6803 / Kazusa).